A 529-amino-acid polypeptide reads, in one-letter code: Berberine bridge enzyme-like 7 (529 aa).

Positions methionine 1 to alanine 19 are cleaved as a signal peptide. Residues cysteine 32 and cysteine 95 are joined by a disulfide bond. N-linked (GlcNAc...) asparagine glycosylation occurs at asparagine 52. Residues tyrosine 69–valine 247 enclose the FAD-binding PCMH-type domain. Positions histidine 110–cysteine 172 form a cross-link, 6-(S-cysteinyl)-8alpha-(pros-histidyl)-FAD (His-Cys). N-linked (GlcNAc...) asparagine glycans are attached at residues asparagine 257, asparagine 341, and asparagine 439.

This sequence belongs to the oxygen-dependent FAD-linked oxidoreductase family. It depends on FAD as a cofactor. The FAD cofactor is bound via a bicovalent 6-S-cysteinyl, 8alpha-N1-histidyl FAD linkage.

The protein localises to the secreted. It localises to the cell wall. In terms of biological role, probable flavin-dependent oxidoreductase. In Arabidopsis thaliana (Mouse-ear cress), this protein is Berberine bridge enzyme-like 7.